The following is a 234-amino-acid chain: Glucosamine-6-phosphate deaminase (234 aa).

Catalysis depends on D62, which acts as the Proton acceptor; for enolization step. The active-site For ring-opening step is N128. H130 serves as the catalytic Proton acceptor; for ring-opening step. E135 functions as the For ring-opening step in the catalytic mechanism.

The protein belongs to the glucosamine/galactosamine-6-phosphate isomerase family. NagB subfamily.

The catalysed reaction is alpha-D-glucosamine 6-phosphate + H2O = beta-D-fructose 6-phosphate + NH4(+). It functions in the pathway amino-sugar metabolism; N-acetylneuraminate degradation; D-fructose 6-phosphate from N-acetylneuraminate: step 5/5. Functionally, catalyzes the reversible isomerization-deamination of glucosamine 6-phosphate (GlcN6P) to form fructose 6-phosphate (Fru6P) and ammonium ion. This chain is Glucosamine-6-phosphate deaminase, found in Streptococcus pyogenes serotype M3 (strain ATCC BAA-595 / MGAS315).